A 591-amino-acid chain; its full sequence is Negative elongation factor D (591 aa).

Residues 1 to 44 (MAGPAPGTIMGEDYFGNASEWGEEADGGQHQEDDSGEGEDDAEV) are disordered. Over residues 34–44 (DSGEGEDDAEV) the composition is skewed to acidic residues.

The protein belongs to the NELF-D family. The NELF complex is composed of NELFA, NELFB, NELFCD and NELFE; NELFA and NELFCD form a stable subcomplex that binds primarily through NELFCD to the N-terminus of NELFB. Binds RNA which may help to stabilize the NELF complex on nucleic acid. In vitro, the NELFA:NELFCD subcomplex binds to ssDNA and ssRNA in a sequence- and structure-dependent manner. Interacts with ARAF1. Interacts with PCF11. Interacts with NELFB. Interacts with KAT8.

It is found in the nucleus. Its function is as follows. Essential component of the NELF complex, a complex that negatively regulates the elongation of transcription by RNA polymerase II. The NELF complex, which acts via an association with the DSIF complex and causes transcriptional pausing, is counteracted by the P-TEFb kinase complex. The polypeptide is Negative elongation factor D (Nelfcd) (Mus musculus (Mouse)).